The following is a 457-amino-acid chain: tRNA modification GTPase MnmE (457 aa).

(6S)-5-formyl-5,6,7,8-tetrahydrofolate-binding residues include arginine 25, glutamate 87, and arginine 126. The region spanning 223 to 377 is the TrmE-type G domain; the sequence is GISTAIIGRP…IEERINQLFF (155 aa). Asparagine 233 is a K(+) binding site. GTP-binding positions include 233–238, 252–258, and 277–280; these read NVGKSS, TDIEGTT, and DTAG. Serine 237 is a Mg(2+) binding site. Threonine 252, isoleucine 254, and threonine 257 together coordinate K(+). A Mg(2+)-binding site is contributed by threonine 258. Position 457 (lysine 457) interacts with (6S)-5-formyl-5,6,7,8-tetrahydrofolate.

Belongs to the TRAFAC class TrmE-Era-EngA-EngB-Septin-like GTPase superfamily. TrmE GTPase family. Homodimer. Heterotetramer of two MnmE and two MnmG subunits. Requires K(+) as cofactor.

It localises to the cytoplasm. In terms of biological role, exhibits a very high intrinsic GTPase hydrolysis rate. Involved in the addition of a carboxymethylaminomethyl (cmnm) group at the wobble position (U34) of certain tRNAs, forming tRNA-cmnm(5)s(2)U34. The polypeptide is tRNA modification GTPase MnmE (Streptococcus sanguinis (strain SK36)).